The following is a 276-amino-acid chain: Rhomboid protease GlpG (276 aa).

6 helical membrane passes run 94–114 (GPVT…MQIL), 142–162 (ALMH…WYLG), 169–189 (LGSG…GYVQ), 192–212 (FSGP…GYVW), 229–249 (LIIF…GMSM), and 250–270 (ANGA…VDSL). Ser-201 acts as the Nucleophile in catalysis. The active site involves His-254.

This sequence belongs to the peptidase S54 family.

Its subcellular location is the cell inner membrane. The catalysed reaction is Cleaves type-1 transmembrane domains using a catalytic dyad composed of serine and histidine that are contributed by different transmembrane domains.. Functionally, rhomboid-type serine protease that catalyzes intramembrane proteolysis. The protein is Rhomboid protease GlpG of Escherichia coli (strain 55989 / EAEC).